The sequence spans 702 residues: Polyribonucleotide nucleotidyltransferase (702 aa).

The Mg(2+) site is built by Asp485 and Asp491. The 61-residue stretch at 552–612 folds into the KH domain; sequence PRTEIICIDP…EGVKKAISII (61 aa). Residues 622–690 enclose the S1 motif domain; the sequence is GEIYLGKVTK…NQGRINLSRK (69 aa).

It belongs to the polyribonucleotide nucleotidyltransferase family. It depends on Mg(2+) as a cofactor.

It localises to the cytoplasm. It catalyses the reaction RNA(n+1) + phosphate = RNA(n) + a ribonucleoside 5'-diphosphate. In terms of biological role, involved in mRNA degradation. Catalyzes the phosphorolysis of single-stranded polyribonucleotides processively in the 3'- to 5'-direction. The protein is Polyribonucleotide nucleotidyltransferase of Clostridium botulinum (strain 657 / Type Ba4).